Consider the following 262-residue polypeptide: Small ribosomal subunit protein uS2 (262 aa).

The protein belongs to the universal ribosomal protein uS2 family.

The protein is Small ribosomal subunit protein uS2 of Borreliella burgdorferi (strain ZS7) (Borrelia burgdorferi).